We begin with the raw amino-acid sequence, 357 residues long: Neurogenic differentiation factor 1 (357 aa).

Residues 1-94 (MTKSYSESGL…GPKKKKMTKA (94 aa)) are disordered. Residues 58 to 78 (EEEDEDEDLEEEEEEEEEEDD) are compositionally biased toward acidic residues. Over residues 81–93 (PKRRGPKKKKMTK) the composition is skewed to basic residues. A Nuclear localization signal motif is present at residues 87–93 (KKKKMTK). The bHLH domain maps to 101–153 (LRRMKANARERNRMHGLNAALDNLRKVVPCYSKTQKLSKIETLRLAKNYIWAL). Phosphoserine is present on residues S162, S259, S266, and S274. S336 is subject to Phosphoserine; by CaMK2.

As to quaternary structure, efficient DNA-binding requires dimerization with another bHLH protein. Heterodimer with TCF3/E47; the heterodimer is inhibited in presence of ID2, but not NR0B2, to E-box element. Interacts with EP300; the interaction is inhibited by NR0B2. Interacts with RREB1. Interacts with ATOH8. Post-translationally, phosphorylated by MAPK1; phosphorylation regulates heterodimerization and DNA-binding activities. Phosphorylation on Ser-266 and Ser-274 increases transactivation on the insulin promoter in glucose-stimulated insulinoma cells. Phosphorylated. In islet cells, phosphorylated on Ser-274 upon glucose stimulation; which may be required for nuclear localization. In activated neurons, phosphorylated on Ser-336 by CaMK2; which promotes dendritic growth.

It localises to the cytoplasm. The protein localises to the nucleus. Acts as a transcriptional activator: mediates transcriptional activation by binding to E box-containing promoter consensus core sequences 5'-CANNTG-3'. Associates with the p300/CBP transcription coactivator complex to stimulate transcription of the secretin gene as well as the gene encoding the cyclin-dependent kinase inhibitor CDKN1A. Contributes to the regulation of several cell differentiation pathways, like those that promote the formation of early retinal ganglion cells, inner ear sensory neurons, granule cells forming either the cerebellum or the dentate gyrus cell layer of the hippocampus, endocrine islet cells of the pancreas and enteroendocrine cells of the small intestine. Together with PAX6 or SIX3, is required for the regulation of amacrine cell fate specification. Also required for dendrite morphogenesis and maintenance in the cerebellar cortex. Associates with chromatin to enhancer regulatory elements in genes encoding key transcriptional regulators of neurogenesis. The sequence is that of Neurogenic differentiation factor 1 (Neurod1) from Rattus norvegicus (Rat).